Reading from the N-terminus, the 204-residue chain is Peptide chain release factor homolog (204 aa).

Residues 2–98 form an rRNA-recognition domain, N-terminus region; sequence ILLQLSSAQG…KNWFLGIGRF (97 aa). Residues 99–107 form a linker 1 region; sequence TADEQEQSD. The interval 108–161 is GGQ domain; sequence AIRYETLRSSGPGGQHVNKTDSAVRATHLASGISVKVQSERSQHANKRLARLLI. The GGQ motif signature appears at 120–122; the sequence is GGQ. The tract at residues 162–179 is linker 2; sequence AWKLEQQQQENSAALKSQ. The rRNA-recognition domain, C-terminus stretch occupies residues 180-204; sequence RRMFHHQIERGNPRRTFTGMAFIEG.

The protein belongs to the prokaryotic/mitochondrial release factor family. Found in the A site of damaged 70S ribosomes, but not in undamaged ribosomes. Contacts (damaged) 16S rRNA, 23S rRNA and ribosomal protein uS12, but not mRNA.

In terms of biological role, peptide chain release-like factor that acts on 70S ribosomes with specific damage to their decoding center (cleavage of 16S rRNA between adenine-1493 and guanosine-1494, E.coli 16S rRNA numbering). Probably acts as a peptidyl-tRNA hydrolase, allowing release of the nascent chain and dissociation of the 30S and 50S subunits. Can release mRNA as short as 19 nucleotides (nt, mRNA-19, which has a single amino acid in the P-site and only a single nt in the A-site) from the ribosome. This specific cleavage is inflicted by CdiA (ECL_04451) or by colicin E3-type (ColE3) proteins. In vivo the PrfH-RtcB2 pair restores growth in the presence of ribotoxins that specifically create this damage. The polypeptide is Peptide chain release factor homolog (Escherichia coli (strain ATCC 25922 / DSM 1103 / LMG 8223 / NCIMB 12210 / NCTC 12241 / WDCM 00013 / Seattle 1946)).